Consider the following 162-residue polypeptide: uncharacterized protein (162 aa).

A signal peptide spans 1 to 21 (MEGIMKKFFALMTLIAGISFS). The stretch at 32–118 (VIRESKFIAK…KKAELEKMVF (87 aa)) forms a coiled coil.

This sequence belongs to the Skp family.

This is an uncharacterized protein from Aquifex aeolicus (strain VF5).